The following is a 264-amino-acid chain: Indole-3-glycerol phosphate synthase (264 aa).

This sequence belongs to the TrpC family.

It catalyses the reaction 1-(2-carboxyphenylamino)-1-deoxy-D-ribulose 5-phosphate + H(+) = (1S,2R)-1-C-(indol-3-yl)glycerol 3-phosphate + CO2 + H2O. It participates in amino-acid biosynthesis; L-tryptophan biosynthesis; L-tryptophan from chorismate: step 4/5. This Xylella fastidiosa (strain M23) protein is Indole-3-glycerol phosphate synthase.